Here is a 160-residue protein sequence, read N- to C-terminus: 6-hydroxypseudooxynicotine dehydrogenase complex subunit beta (160 aa).

The 77-residue stretch at 4 to 80 (FRLTVEVNGV…NSRIETVESL (77 aa)) folds into the 2Fe-2S ferredoxin-type domain. Cys-42, Cys-47, Cys-50, Cys-62, Cys-101, Cys-104, Cys-137, and Cys-139 together coordinate [2Fe-2S] cluster.

In terms of assembly, heterohexamer of 2 alpha (kdhA), 2 beta (kdhB) and 2 gamma (kdhC) subunit. Dimer of heterotrimers. [2Fe-2S] cluster serves as cofactor.

The catalysed reaction is 6-hydroxypseudooxynicotine + A + H2O = 2,6-dihydroxypseudooxynicotine + AH2. Its pathway is alkaloid degradation; nicotine degradation. Molybdo-flavoprotein enzyme complex involved in nicotine degradation. The subunit gamma (large subunit) contains the substrate-binding sites, the subunit alpha (medium subunit) binds FAD and the subunit beta (small subunit) has a 2Fe-2S ferredoxin-type domain which binds 2 2Fe-2S clusters. The polypeptide is 6-hydroxypseudooxynicotine dehydrogenase complex subunit beta (kdhB) (Paenarthrobacter nicotinovorans (Arthrobacter nicotinovorans)).